The sequence spans 323 residues: Formyl peptide receptor-related sequence 4 (323 aa).

Residues 1–29 (MEVNISMPLNGSEVVFYDSTTSRVLWILS) are Extracellular-facing. Residues N4 and N10 are each glycosylated (N-linked (GlcNAc...) asparagine). The helical transmembrane segment at 30-50 (LVVLFITFVLGVLGNGLVIWV) threads the bilayer. Residues 51 to 66 (AGFQMAHTVTTVSYLN) lie on the Cytoplasmic side of the membrane. Residues 67-87 (LALSDLSFMATLPLHIISMVM) form a helical membrane-spanning segment. Topologically, residues 88-99 (RGKWLFGWFLCK) are extracellular. C98 and C176 are oxidised to a cystine. A helical transmembrane segment spans residues 100–120 (LVHIIANINLFVSIFLITLIA). At 121–144 (MDRCICVLCPVWSQNHRTVSLARK) the chain is on the cytoplasmic side. A helical transmembrane segment spans residues 145–165 (VVLGAWIFALLLTLPHFLFLT). Over 166-202 (TVRDARGDVYCISKFESWVATSEEQLKVSVIAATASG) the chain is Extracellular. The chain crosses the membrane as a helical span at residues 203 to 223 (IINFIIGFSMPMSFIAICYGL). Topologically, residues 224–241 (MAAKICRRGFVNSSRPLR) are cytoplasmic. The chain crosses the membrane as a helical span at residues 242 to 262 (VLTAVAVSFFVCWFPFQLIML). At 263–280 (LGNIFNNETLSIIHMLVN) the chain is on the extracellular side. Residue N269 is glycosylated (N-linked (GlcNAc...) asparagine). Residues 281 to 301 (PANTLASFNSCLNPILYVFLG) form a helical membrane-spanning segment. The Cytoplasmic portion of the chain corresponds to 302 to 323 (QEFRDRLIYSLYASLERALRED).

This sequence belongs to the G-protein coupled receptor 1 family. In terms of tissue distribution, expressed in 0.6 % of a subset of sensory neurons located in the apical layer of the vomeronasal organ. Each neuron appears to express only one receptor gene.

Its subcellular location is the cell membrane. In terms of biological role, may have an olfactory function associated with the identification of pathogens or of pathogenic states. The protein is Formyl peptide receptor-related sequence 4 (Fpr-rs4) of Mus musculus (Mouse).